Consider the following 133-residue polypeptide: CDGSH iron-sulfur domain-containing protein 2 homolog (133 aa).

Over 1 to 35 (MQSVSQVVKTSLPNYLSSLPVPDTFGGWFKLSFKD) the chain is Lumenal. A helical transmembrane segment spans residues 36–58 (WLALIPPTAVVVGIGYVTYRAFY). At 59–133 (PKAHRTCKSG…NVGPIVIKKK (75 aa)) the chain is on the cytoplasmic side. Positions 99, 101, 110, and 114 each coordinate [2Fe-2S] cluster.

Belongs to the CISD protein family. CISD2 subfamily. [2Fe-2S] cluster is required as a cofactor.

It localises to the endoplasmic reticulum membrane. The chain is CDGSH iron-sulfur domain-containing protein 2 homolog from Drosophila virilis (Fruit fly).